Here is an 822-residue protein sequence, read N- to C-terminus: Fibroblast growth factor receptor 1 (822 aa).

Residues methionine 1–alanine 21 form the signal peptide. The Extracellular portion of the chain corresponds to arginine 22–glutamate 376. One can recognise an Ig-like C2-type 1 domain in the interval proline 25–serine 119. A disulfide bridge links cysteine 55 with cysteine 101. Residues asparagine 77 and asparagine 117 are each glycosylated (N-linked (GlcNAc...) asparagine). The segment at aspartate 120–glutamate 162 is disordered. Acidic residues predominate over residues serine 125–serine 135. Positions serine 136–lysine 145 are enriched in basic and acidic residues. Ig-like C2-type domains follow at residues proline 158 to aspartate 246 and proline 255 to threonine 357. The interval lysine 160 to lysine 177 is heparin-binding. Residues cysteine 178 and cysteine 230 are joined by a disulfide bond. Asparagine 227, asparagine 240, asparagine 264, asparagine 296, asparagine 317, and asparagine 330 each carry an N-linked (GlcNAc...) asparagine glycan. A disulfide bond links cysteine 277 and cysteine 341. The helical transmembrane segment at isoleucine 377–tyrosine 397 threads the bilayer. Over lysine 398 to arginine 822 the chain is Cytoplasmic. Tyrosine 463 is subject to Phosphotyrosine; by autocatalysis. One can recognise a Protein kinase domain in the interval leucine 478–leucine 767. Residues leucine 484 to glycine 490, lysine 514, glutamate 562 to alanine 564, and asparagine 568 contribute to the ATP site. Residues tyrosine 583 and tyrosine 585 each carry the phosphotyrosine; by autocatalysis modification. Aspartate 623 (proton acceptor) is an active-site residue. ATP is bound by residues arginine 627 and aspartate 641. Tyrosine 653, tyrosine 654, tyrosine 730, and tyrosine 766 each carry phosphotyrosine; by autocatalysis. Polar residues predominate over residues aspartate 782 to glutamate 792. The tract at residues aspartate 782–arginine 822 is disordered.

Belongs to the protein kinase superfamily. Tyr protein kinase family. Fibroblast growth factor receptor subfamily. As to quaternary structure, monomer. Homodimer after ligand binding. Interacts predominantly with FGF1 and FGF2, but can also interact with FGF3, FGF4, FGF5, FGF6, FGF8, FGF10, FGF19, FGF21, FGF22 and FGF23 (in vitro). Ligand specificity is determined by tissue-specific expression of isoforms, and differences in the third Ig-like domain are crucial for ligand specificity. Affinity for fibroblast growth factors (FGFs) is increased by heparan sulfate glycosaminoglycans that function as coreceptors. Likewise, KLB increases the affinity for FGF19, FGF21 and FGF23. Interacts (phosphorylated on Tyr-766) with PLCG1 (via SH2 domains). Interacts with FRS2. Interacts with RPS6KA1. Interacts (via C-terminus) with NEDD4 (via WW3 domain). Interacts with KL. Interacts with SHB (via SH2 domain). Interacts with GRB10. Interacts with ANOS1; this interaction does not interfere with FGF2-binding to FGFR1, but prevents binding of heparin-bound FGF2. Interacts with SOX2 and SOX3. Interacts with FLRT1, FLRT2 and FLRT3. Found in a ternary complex with FGF1 and ITGAV:ITGB3. Autophosphorylated. Binding of FGF family members together with heparan sulfate proteoglycan or heparin promotes receptor dimerization and autophosphorylation on tyrosine residues. Autophosphorylation occurs in trans between the two FGFR molecules present in the dimer and proceeds in a highly ordered manner. Initial autophosphorylation at Tyr-653 increases the kinase activity by a factor of 50 to 100. After this, Tyr-583 becomes phosphorylated, followed by phosphorylation of Tyr-463, Tyr-766, Tyr-583 and Tyr-585. In a third stage, Tyr-654 is autophosphorylated, resulting in a further tenfold increase of kinase activity. Phosphotyrosine residues provide docking sites for interacting proteins and so are crucial for FGFR1 function and its regulation. Post-translationally, ubiquitinated. FGFR1 is rapidly ubiquitinated by NEDD4 after autophosphorylation, leading to internalization and lysosomal degradation. CBL is recruited to activated FGFR1 via FRS2 and GRB2, and mediates ubiquitination and subsequent degradation of FGFR1. In terms of processing, N-glycosylated in the endoplasmic reticulum. The N-glycan chains undergo further maturation to an Endo H-resistant form in the Golgi apparatus. As to expression, widely expressed.

It localises to the cell membrane. The protein localises to the nucleus. It is found in the cytoplasm. The protein resides in the cytosol. Its subcellular location is the cytoplasmic vesicle. It catalyses the reaction L-tyrosyl-[protein] + ATP = O-phospho-L-tyrosyl-[protein] + ADP + H(+). Its activity is regulated as follows. Present in an inactive conformation in the absence of bound ligand. Ligand binding leads to dimerization and activation by sequential autophosphorylation on tyrosine residues. Tyrosine-protein kinase that acts as a cell-surface receptor for fibroblast growth factors and plays an essential role in the regulation of embryonic development, cell proliferation, differentiation and migration. Required for normal mesoderm patterning and correct axial organization during embryonic development, normal skeletogenesis and normal development of the gonadotropin-releasing hormone (GnRH) neuronal system. Phosphorylates PLCG1, FRS2, GAB1 and SHB. Ligand binding leads to the activation of several signaling cascades. Activation of PLCG1 leads to the production of the cellular signaling molecules diacylglycerol and inositol 1,4,5-trisphosphate. Phosphorylation of FRS2 triggers recruitment of GRB2, GAB1, PIK3R1 and SOS1, and mediates activation of RAS, MAPK1/ERK2, MAPK3/ERK1 and the MAP kinase signaling pathway, as well as of the AKT1 signaling pathway. Promotes phosphorylation of SHC1, STAT1 and PTPN11/SHP2. In the nucleus, enhances RPS6KA1 and CREB1 activity and contributes to the regulation of transcription. FGFR1 signaling is down-regulated by IL17RD/SEF, and by FGFR1 ubiquitination, internalization and degradation. The protein is Fibroblast growth factor receptor 1 (Fgfr1) of Mus musculus (Mouse).